The following is a 203-amino-acid chain: Small ribosomal subunit protein uS4 (203 aa).

An S4 RNA-binding domain is found at 93 to 173 (RRFDNVVFRS…IPSWIQVDKA (81 aa)).

This sequence belongs to the universal ribosomal protein uS4 family. In terms of assembly, part of the 30S ribosomal subunit. Contacts protein S5. The interaction surface between S4 and S5 is involved in control of translational fidelity.

Its function is as follows. One of the primary rRNA binding proteins, it binds directly to 16S rRNA where it nucleates assembly of the body of the 30S subunit. In terms of biological role, with S5 and S12 plays an important role in translational accuracy. In Chlorobium phaeobacteroides (strain DSM 266 / SMG 266 / 2430), this protein is Small ribosomal subunit protein uS4.